The primary structure comprises 129 residues: Small ribosomal subunit protein uS11 (129 aa).

The protein belongs to the universal ribosomal protein uS11 family. As to quaternary structure, part of the 30S ribosomal subunit. Interacts with proteins S7 and S18. Binds to IF-3.

Located on the platform of the 30S subunit, it bridges several disparate RNA helices of the 16S rRNA. Forms part of the Shine-Dalgarno cleft in the 70S ribosome. In Paracoccus denitrificans (strain Pd 1222), this protein is Small ribosomal subunit protein uS11.